A 61-amino-acid polypeptide reads, in one-letter code: Protein CopA/IncA (61 aa).

Controls the copy number in gene replication. This is Protein CopA/IncA (copA) from Escherichia coli.